Here is a 205-residue protein sequence, read N- to C-terminus: Large ribosomal subunit protein uL3 (205 aa).

This sequence belongs to the universal ribosomal protein uL3 family. Part of the 50S ribosomal subunit. Forms a cluster with proteins L14 and L19.

One of the primary rRNA binding proteins, it binds directly near the 3'-end of the 23S rRNA, where it nucleates assembly of the 50S subunit. This chain is Large ribosomal subunit protein uL3, found in Flavobacterium johnsoniae (strain ATCC 17061 / DSM 2064 / JCM 8514 / BCRC 14874 / CCUG 350202 / NBRC 14942 / NCIMB 11054 / UW101) (Cytophaga johnsonae).